Here is a 122-residue protein sequence, read N- to C-terminus: UPF0231 protein VP2494 (122 aa).

It belongs to the UPF0231 family.

This is UPF0231 protein VP2494 from Vibrio parahaemolyticus serotype O3:K6 (strain RIMD 2210633).